The sequence spans 425 residues: Pectate lyase L (425 aa).

Residues 1-25 form the signal peptide; it reads MKYLNCFISTGLAAFFLVNSTSVLA. Cysteine 28 and cysteine 114 are joined by a disulfide. Residues aspartate 209, aspartate 233, aspartate 234, and aspartate 237 each coordinate Ca(2+). Lysine 273 acts as the Proton acceptor in catalysis. 5 residues coordinate Ca(2+): asparagine 402, serine 413, alanine 416, aspartate 418, and glutamate 423.

It belongs to the polysaccharide lyase 9 family. Ca(2+) serves as cofactor.

Its subcellular location is the secreted. It catalyses the reaction Eliminative cleavage of (1-&gt;4)-alpha-D-galacturonan to give oligosaccharides with 4-deoxy-alpha-D-galact-4-enuronosyl groups at their non-reducing ends.. It functions in the pathway glycan metabolism; pectin degradation; 2-dehydro-3-deoxy-D-gluconate from pectin: step 2/5. Its function is as follows. Presents an endo-cleaving activity on polygalacturonate or partially methylated pectin. The sequence is that of Pectate lyase L (pelL) from Dickeya chrysanthemi (Pectobacterium chrysanthemi).